The sequence spans 299 residues: Methionyl-tRNA formyltransferase (299 aa).

109–112 provides a ligand contact to (6S)-5,6,7,8-tetrahydrofolate; it reads SLLP.

The protein belongs to the Fmt family.

The catalysed reaction is L-methionyl-tRNA(fMet) + (6R)-10-formyltetrahydrofolate = N-formyl-L-methionyl-tRNA(fMet) + (6S)-5,6,7,8-tetrahydrofolate + H(+). Its function is as follows. Attaches a formyl group to the free amino group of methionyl-tRNA(fMet). The formyl group appears to play a dual role in the initiator identity of N-formylmethionyl-tRNA by promoting its recognition by IF2 and preventing the misappropriation of this tRNA by the elongation apparatus. The protein is Methionyl-tRNA formyltransferase of Dinoroseobacter shibae (strain DSM 16493 / NCIMB 14021 / DFL 12).